The primary structure comprises 198 residues: Carnitine operon protein CaiE (198 aa).

The disordered stretch occupies residues 174–198 (KPLTQAEENRPRLKGTTDVKPKSAQ). Over residues 180 to 198 (EENRPRLKGTTDVKPKSAQ) the composition is skewed to basic and acidic residues.

It belongs to the transferase hexapeptide repeat family.

It functions in the pathway amine and polyamine metabolism; carnitine metabolism. In terms of biological role, overproduction of CaiE stimulates the activity of CaiB and CaiD. The protein is Carnitine operon protein CaiE of Salmonella dublin (strain CT_02021853).